Here is a 192-residue protein sequence, read N- to C-terminus: dCTP deaminase, dUMP-forming (192 aa).

DCTP-binding positions include 101–106 (KSSLGR), aspartate 119, 127–129 (TLE), glutamine 148, tyrosine 162, and glutamine 174. Glutamate 129 serves as the catalytic Proton donor/acceptor. Residues 162–192 (YGSGADGSRYQGQRGPTASRSHVKFHRTHVE) are disordered. Over residues 171–181 (YQGQRGPTASR) the composition is skewed to polar residues. Residues 182–192 (SHVKFHRTHVE) show a composition bias toward basic residues.

It belongs to the dCTP deaminase family. Homotrimer.

The catalysed reaction is dCTP + 2 H2O = dUMP + NH4(+) + diphosphate. It functions in the pathway pyrimidine metabolism; dUMP biosynthesis; dUMP from dCTP: step 1/1. Functionally, bifunctional enzyme that catalyzes both the deamination of dCTP to dUTP and the hydrolysis of dUTP to dUMP without releasing the toxic dUTP intermediate. The polypeptide is dCTP deaminase, dUMP-forming (Beutenbergia cavernae (strain ATCC BAA-8 / DSM 12333 / CCUG 43141 / JCM 11478 / NBRC 16432 / NCIMB 13614 / HKI 0122)).